Here is a 486-residue protein sequence, read N- to C-terminus: Elastin-binding protein EbpS (486 aa).

Over residues 1-40 (MSNNFKDDFEKNRQSIDTNSHQDHTEDVEKDQSELEHQDT) the composition is skewed to basic and acidic residues. The tract at residues 1-314 (MSNNFKDDFE…NHDRDKERKK (314 aa)) is disordered. The Extracellular portion of the chain corresponds to 2–204 (SNNFKDDFEK…EPKEHHNGKK (203 aa)). Residues 14–34 (QSIDTNSHQDHTEDVEKDQSE) form an elastin-binding region. The span at 64–85 (TNHNKQVHNESQTSEDNVQNEA) shows a compositional bias: polar residues. 2 stretches are compositionally biased toward basic and acidic residues: residues 103-118 (EPSH…EEYY) and 126-143 (DKSH…DTIK). Polar residues predominate over residues 161 to 179 (EQSQQPKPYFTTGANQSET). Over residues 180–199 (SKNEHDNDSVKQDQDEPKEH) the composition is skewed to basic and acidic residues. Positions 204-225 (KAAAIGAGTAGVAGAAGAMAAS) are enriched in low complexity. A helical transmembrane segment spans residues 205-225 (AAAIGAGTAGVAGAAGAMAAS). Over 226–319 (KAKKHSNDAQ…KERKKGGMAK (94 aa)) the chain is Cytoplasmic. Over residues 233–246 (DAQNKSNSGKANNS) the composition is skewed to polar residues. Basic and acidic residues predominate over residues 247–259 (TEDKASQDKSKDH). Positions 278 to 297 (GAASKSASAASKPHASNNAS) are enriched in low complexity. Basic and acidic residues predominate over residues 299–314 (NHDEHDNHDRDKERKK). A helical transmembrane segment spans residues 320–340 (VLLPLIAAVLIIGALAIFGGM). Over 341 to 486 (ALNNHNNGTK…IRNGQQIVIP (146 aa)) the chain is Extracellular. A disordered region spans residues 351 to 440 (ENKIANTNKN…QRQGGGQRHT (90 aa)). Residues 361–398 (NADESKDKDTSKDASKDKSKSTDSDKSKEDQDKATKDE) are compositionally biased toward basic and acidic residues. A compositionally biased stretch (low complexity) spans 403-431 (QNNANQANNQAQNNQNQQQANQNQQQQQQ). A LysM domain is found at 437-485 (QRHTVNGQENLYRIAIQYYGSGSPENVEKIRRANGLSGNNIRNGQQIVI).

Its subcellular location is the cell membrane. Its function is as follows. Promotes binding of soluble elastin peptides and tropoelastin to S.aureus cells although it is not able to promote bacterial adherence to immobilized elastin and, therefore, is not a microbial surface component recognizing adhesive matrix molecule (MSCRAMM). The sequence is that of Elastin-binding protein EbpS (ebpS) from Staphylococcus aureus (strain USA300).